The sequence spans 201 residues: Urease accessory protein UreG (201 aa).

GTP is bound at residue 11-18 (GPVGSGKT).

It belongs to the SIMIBI class G3E GTPase family. UreG subfamily. Homodimer. UreD, UreF and UreG form a complex that acts as a GTP-hydrolysis-dependent molecular chaperone, activating the urease apoprotein by helping to assemble the nickel containing metallocenter of UreC. The UreE protein probably delivers the nickel.

The protein localises to the cytoplasm. Functionally, facilitates the functional incorporation of the urease nickel metallocenter. This process requires GTP hydrolysis, probably effectuated by UreG. This chain is Urease accessory protein UreG, found in Prochlorococcus marinus subsp. pastoris (strain CCMP1986 / NIES-2087 / MED4).